The primary structure comprises 569 residues: Spermatogenesis-associated protein 16 (569 aa).

Residues 67–92 (KGIKEKQSNDLEKAAFKRKAEGEEKP) are compositionally biased toward basic and acidic residues. Residues 67-96 (KGIKEKQSNDLEKAAFKRKAEGEEKPTRKK) form a disordered region.

This sequence belongs to the SPATA16 family. In terms of tissue distribution, expressed in testis.

It is found in the golgi apparatus. It localises to the cytoplasmic vesicle. The protein localises to the secretory vesicle. Its subcellular location is the acrosome. Essential for spermiogenesis and male fertility. Involved in the formation of sperm acrosome during spermatogenesis. This is Spermatogenesis-associated protein 16 (SPATA16) from Homo sapiens (Human).